A 157-amino-acid chain; its full sequence is Endoribonuclease YbeY (157 aa).

Positions 116, 120, and 126 each coordinate Zn(2+).

Belongs to the endoribonuclease YbeY family. Requires Zn(2+) as cofactor.

It is found in the cytoplasm. Its function is as follows. Single strand-specific metallo-endoribonuclease involved in late-stage 70S ribosome quality control and in maturation of the 3' terminus of the 16S rRNA. This chain is Endoribonuclease YbeY, found in Renibacterium salmoninarum (strain ATCC 33209 / DSM 20767 / JCM 11484 / NBRC 15589 / NCIMB 2235).